A 556-amino-acid polypeptide reads, in one-letter code: Formate--tetrahydrofolate ligase (556 aa).

65-72 (TPAGEGKS) lines the ATP pocket.

Belongs to the formate--tetrahydrofolate ligase family.

The catalysed reaction is (6S)-5,6,7,8-tetrahydrofolate + formate + ATP = (6R)-10-formyltetrahydrofolate + ADP + phosphate. Its pathway is one-carbon metabolism; tetrahydrofolate interconversion. This Enterococcus faecalis (strain ATCC 700802 / V583) protein is Formate--tetrahydrofolate ligase.